The primary structure comprises 293 residues: MAAITASMVAELRAKTDAPMMECKKALTEADGDLAKAEELLRVKLGNKASKAASRVTAEGVVASFVGGNAGALVELNCETDFVAKNDDFLAFSKTVAELVATQNPADVAALSALPLEGSTVDAVRLALIGKIGENVSIRRFVRFETANKIATYLHGARIGVIVEYTGAEEQVGKDVAMHIAAMKPVALSSADVPAELIDTERRVAEQKAAESGKPAEIVAKMVDGSVQKYLKEVSLLNQTFVKNDKQTIEQMLKAANATVQKFALFVVGEGIEKRQDDFAAEVAAQVAAAKQQ.

Residues 80–83 form an involved in Mg(2+) ion dislocation from EF-Tu region; the sequence is TDFV.

It belongs to the EF-Ts family.

It is found in the cytoplasm. Its function is as follows. Associates with the EF-Tu.GDP complex and induces the exchange of GDP to GTP. It remains bound to the aminoacyl-tRNA.EF-Tu.GTP complex up to the GTP hydrolysis stage on the ribosome. This Burkholderia cenocepacia (strain HI2424) protein is Elongation factor Ts.